A 178-amino-acid polypeptide reads, in one-letter code: Deoxycytidylate deaminase (178 aa).

Positions 14–146 (EWPEYFMAVA…EATAARLLFD (133 aa)) constitute a CMP/dCMP-type deaminase domain. Zn(2+) is bound at residue His84. Catalysis depends on Glu86, which acts as the Proton donor. Zn(2+) contacts are provided by Cys110 and Cys113. A Phosphoserine modification is found at Ser174.

This sequence belongs to the cytidine and deoxycytidylate deaminase family. In terms of assembly, homohexamer. It depends on Zn(2+) as a cofactor.

The enzyme catalyses dCMP + H2O + H(+) = dUMP + NH4(+). The catalysed reaction is 5-hydroxymethyl-dCMP + H2O + H(+) = 5-hydroxymethyl-dUMP + NH4(+). With respect to regulation, allosteric enzyme whose activity is greatly influenced by the end products of its metabolic pathway, dCTP and dTTP. Functionally, catalyzes the deamination of dCMP to dUMP, providing the nucleoside monophosphate substrate for the thymidylate synthase/TYMS. Also, part of a nucleotide salvage pathway that eliminates epigenetically modified 5-hydroxymethyl-dCMP (hmdCMP) in a two-step process entailing deamination to cytotoxic 5-hydroxymethyl-dUMP (hmdUMP), followed by its hydrolysis into 5-hydroxymethyluracil (hmU) and 2-deoxy-D-ribose 5-phosphate (deoxyribosephosphate). Catalyzes the first step in that pathway, the deamination of 5-hydroxymethyl-dCMP (hmdCMP). This is Deoxycytidylate deaminase from Pongo abelii (Sumatran orangutan).